A 131-amino-acid chain; its full sequence is Large ribosomal subunit protein bL12 (131 aa).

The segment covering 100 to 125 has biased composition (basic and acidic residues); sequence STPKPIKEGISKEDAEAAKKQLEDAG. The tract at residues 100–131 is disordered; the sequence is STPKPIKEGISKEDAEAAKKQLEDAGGKVSIK.

Belongs to the bacterial ribosomal protein bL12 family. Homodimer. Part of the ribosomal stalk of the 50S ribosomal subunit. Forms a multimeric L10(L12)X complex, where L10 forms an elongated spine to which 2 to 4 L12 dimers bind in a sequential fashion. Binds GTP-bound translation factors.

Forms part of the ribosomal stalk which helps the ribosome interact with GTP-bound translation factors. Is thus essential for accurate translation. This chain is Large ribosomal subunit protein bL12, found in Cyanothece sp. (strain PCC 7425 / ATCC 29141).